The following is a 189-amino-acid chain: MDAVDTTMEKLRAQCLSRGASGIQGVARFFRRLDQDGSRSLDVRELQRGLAELGLVLDTAEMEGVCRRWDRDGSGTLDLEEFLRALRPPMSQAREAVVTAAFAKLDRSGDGVVTVDDLRGVYSGRTHPKVRSGEWTEEQVLRHFLDNFDSSEKDGQVTLAEFQDYYSGVSASMDTDEEFVAMMTSAWRL.

4 consecutive EF-hand domains span residues 21–56 (SGIQGVARFFRRLDQDGSRSLDVRELQRGLAELGLV), 57–92 (LDTAEMEGVCRRWDRDGSGTLDLEEFLRALRPPMSQ), 93–128 (AREAVVTAAFAKLDRSGDGVVTVDDLRGVYSGRTHP), and 136–172 (TEEQVLRHFLDNFDSSEKDGQVTLAEFQDYYSGVSAS). Ca(2+) is bound by residues Asp-34, Asp-36, Ser-38, Ser-40, Glu-45, Asp-70, Asp-72, Ser-74, Thr-76, Glu-81, Asp-106, Ser-108, Asp-110, and Asp-117. Position 40 is a phosphoserine; by PKA (Ser-40).

As to quaternary structure, monomer. Does not form oligomers in the presence of calcium.

Its subcellular location is the cytoplasm. In terms of biological role, calcium-binding protein. May play a role in cellular signaling events (Potential). This chain is Calcyphosin (CAPS), found in Bos taurus (Bovine).